The primary structure comprises 137 residues: MLQPKRTKFRKQQKMRNRGLAHRGNKVSFGEFGLQATSRGRVTARQIEAGRRAISRHIKRGGKIWIRIFPDKPITQKPLEVRMGKGKGSVEYWVAQIQPGRVLYEITGVKEELAREAFARAAAKMPVQTTFVEKQVM.

The disordered stretch occupies residues 1–20 (MLQPKRTKFRKQQKMRNRGL).

It belongs to the universal ribosomal protein uL16 family. In terms of assembly, part of the 50S ribosomal subunit.

In terms of biological role, binds 23S rRNA and is also seen to make contacts with the A and possibly P site tRNAs. This Francisella philomiragia subsp. philomiragia (strain ATCC 25017 / CCUG 19701 / FSC 153 / O#319-036) protein is Large ribosomal subunit protein uL16.